A 172-amino-acid polypeptide reads, in one-letter code: Protein 3 (172 aa).

In Northern cereal mosaic virus (NCMV), this protein is Protein 3 (3).